Reading from the N-terminus, the 122-residue chain is Small ribosomal subunit protein uS13 (122 aa).

Residues 99–122 (RGQRTHTNARTRKGPAKAIAGKKK) are disordered.

This sequence belongs to the universal ribosomal protein uS13 family. In terms of assembly, part of the 30S ribosomal subunit. Forms a loose heterodimer with protein S19. Forms two bridges to the 50S subunit in the 70S ribosome.

Its function is as follows. Located at the top of the head of the 30S subunit, it contacts several helices of the 16S rRNA. In the 70S ribosome it contacts the 23S rRNA (bridge B1a) and protein L5 of the 50S subunit (bridge B1b), connecting the 2 subunits; these bridges are implicated in subunit movement. Contacts the tRNAs in the A and P-sites. The polypeptide is Small ribosomal subunit protein uS13 (Bradyrhizobium sp. (strain BTAi1 / ATCC BAA-1182)).